A 93-amino-acid polypeptide reads, in one-letter code: uncharacterized protein (93 aa).

To E.coli YeaC.

This is an uncharacterized protein from Pseudoalteromonas haloplanktis (Alteromonas haloplanktis).